A 21-amino-acid chain; its full sequence is Alpha-aminoadipic semialdehyde dehydrogenase (21 aa).

Belongs to the aldehyde dehydrogenase family. Homotetramer.

It carries out the reaction (S)-2-amino-6-oxohexanoate + NADP(+) + H2O = L-2-aminoadipate + NADPH + 2 H(+). It catalyses the reaction (S)-2-amino-6-oxohexanoate + NAD(+) + H2O = L-2-aminoadipate + NADH + 2 H(+). This Ctenopharyngodon idella (Grass carp) protein is Alpha-aminoadipic semialdehyde dehydrogenase (aldh7a1).